The chain runs to 275 residues: Putative carbamate hydrolase RutD (275 aa).

The protein belongs to the AB hydrolase superfamily. Hydrolase RutD family.

The enzyme catalyses carbamate + 2 H(+) = NH4(+) + CO2. Functionally, involved in pyrimidine catabolism. May facilitate the hydrolysis of carbamate, a reaction that can also occur spontaneously. This is Putative carbamate hydrolase RutD from Escherichia coli (strain UTI89 / UPEC).